The primary structure comprises 116 residues: Dynein light chain Tctex-type 3 (116 aa).

The residue at position 4 (Y4) is a 3'-nitrotyrosine.

The protein belongs to the dynein light chain Tctex-type family. Homodimer. The cytoplasmic dynein 1 complex consists of two catalytic heavy chains (HCs) and a number of non-catalytic subunits presented by intermediate chains (ICs), light intermediate chains (LICs) and light chains (LCs); the composition seems to vary in respect to the IC, LIC and LC composition. The heavy chain homodimer serves as a scaffold for the probable homodimeric assembly of the respective non-catalytic subunits. The ICs and LICs bind directly to the HC dimer and the LCs assemble on the IC dimer. DYNLT1 and DYNLT3 compete for association with dynein IC (DYNC1I1 or DYNC1I2). Self-associates. Interacts with DYNC1I1 and DYNC1I2. Interacts with BUB3. Interacts with SATB1 in nucleus to form complex with matrix attachment regions (MARs) of DNA.

Its subcellular location is the nucleus. It localises to the cytoplasm. The protein resides in the cytoskeleton. The protein localises to the chromosome. It is found in the centromere. Its subcellular location is the kinetochore. Its function is as follows. Acts as one of several non-catalytic accessory components of the cytoplasmic dynein 1 complex that are thought to be involved in linking dynein to cargos and to adapter proteins that regulate dynein function. Cytoplasmic dynein 1 acts as a motor for the intracellular retrograde motility of vesicles and organelles along microtubules. Probably binds BUB3 as part of transport cargo. Required for the efficient progression through mitosis. The chain is Dynein light chain Tctex-type 3 (DYNLT3) from Homo sapiens (Human).